We begin with the raw amino-acid sequence, 537 residues long: Eukaryotic translation initiation factor 3 subunit L (537 aa).

Residues 1-19 (MSRRVEFDLSTEDHSDRRR) show a composition bias toward basic and acidic residues. The segment at 1 to 30 (MSRRVEFDLSTEDHSDRRRTNTFSSSADED) is disordered. Residues 299–487 (EATKMFVNCL…GPSSADDDEP (189 aa)) enclose the PCI domain.

It belongs to the eIF-3 subunit L family. Component of the eukaryotic translation initiation factor 3 (eIF-3) complex.

Its subcellular location is the cytoplasm. In terms of biological role, component of the eukaryotic translation initiation factor 3 (eIF-3) complex, which is involved in protein synthesis of a specialized repertoire of mRNAs and, together with other initiation factors, stimulates binding of mRNA and methionyl-tRNAi to the 40S ribosome. The eIF-3 complex specifically targets and initiates translation of a subset of mRNAs involved in cell proliferation. The sequence is that of Eukaryotic translation initiation factor 3 subunit L from Caenorhabditis elegans.